The following is a 179-amino-acid chain: ATP synthase subunit delta (179 aa).

This sequence belongs to the ATPase delta chain family. As to quaternary structure, F-type ATPases have 2 components, F(1) - the catalytic core - and F(0) - the membrane proton channel. F(1) has five subunits: alpha(3), beta(3), gamma(1), delta(1), epsilon(1). F(0) has three main subunits: a(1), b(2) and c(10-14). The alpha and beta chains form an alternating ring which encloses part of the gamma chain. F(1) is attached to F(0) by a central stalk formed by the gamma and epsilon chains, while a peripheral stalk is formed by the delta and b chains.

The protein localises to the cell inner membrane. F(1)F(0) ATP synthase produces ATP from ADP in the presence of a proton or sodium gradient. F-type ATPases consist of two structural domains, F(1) containing the extramembraneous catalytic core and F(0) containing the membrane proton channel, linked together by a central stalk and a peripheral stalk. During catalysis, ATP synthesis in the catalytic domain of F(1) is coupled via a rotary mechanism of the central stalk subunits to proton translocation. Functionally, this protein is part of the stalk that links CF(0) to CF(1). It either transmits conformational changes from CF(0) to CF(1) or is implicated in proton conduction. The chain is ATP synthase subunit delta from Burkholderia lata (strain ATCC 17760 / DSM 23089 / LMG 22485 / NCIMB 9086 / R18194 / 383).